Consider the following 756-residue polypeptide: MDVRPKENFSQRQDTSAVRHRKTCKVNERAEIPSQPHNGTINGVNKRITKREGGEHISSPSRDAHVPVFILALVIVLSVSTRFYKITEPPHVCWDETHFGKMGSYYINRTFFFDVHPPLGKMLIGLAGYLTGYDGTFPFIKPGDKYEHHNYWGMRAFCAALGSCLPPFAFLVVLELSQSSTAALIAASLLIFDTGCITLSQYILLDPILMFFIMGSVLCMVKFNTQRLGPFSFSWWFWLLLTGLCLSGSLGVKFVGLFVILLVGINTALDLWRLLGDLSLSLVDFGKHLLARVFGLIMLPLFLYTTIFAIHFIVLNRSGPGDGFFSSAFQSRLIGNNLHNASMPEYLAYGSVITVKNLRIAGGYLHSHWHLYPEGVGAHQQQVTAYLHKDYNNLWLVKRLDNSDDLTGSPELVRHGDIIRLEHKETTRNLHSHFHEAPLTKKHLQVTGYGINGSGDVNDLWQVEVCGGRKGDPVKVLRSKVRFLHRATGCVLCSSGKTLPKWGWEQVEVTCSPYVKETPNSQWNIEDHINPKLPNISLAVLKPTFLEILWESHIVMIRGNSGLKPKDNEMNSKPWHWPINYQGLRFSGVNETEYRVYLLGNPVIWWLNLLSLALFVILLTVASLAVQRRVKMEGMMKVHCHTLMEGGGMLFLGWLLHYLPFYIMGRILYYHHYFPAMMFSSMLTGITLDILLQNLQLLFSSSLSHYLMRGGQSVLLLGFIYSFYLFHPLSYGMRGPLAHDSASSMAGLRWMESWEF.

Helical transmembrane passes span 64-84 (AHVP…TRFY), 110-130 (TFFF…AGYL), 156-176 (AFCA…VLEL), 179-199 (SSTA…CITL), 203-223 (ILLD…MVKF), 245-265 (CLSG…LVGI), and 293-313 (VFGL…IHFI). 3 consecutive MIR domains span residues 344–400 (PEYL…VKRL), 410–466 (PELV…VEVC), and 471–528 (GDPV…IEDH). A run of 4 helical transmembrane segments spans residues 602–622 (PVIW…LTVA), 643–663 (LMEG…PFYI), 672–692 (HYFP…DILL), and 713–733 (SVLL…SYGM).

Belongs to the glycosyltransferase 39 family. As to expression, widely expressed. Has particularly strong expression in ovary, testis, liver, brain, muscle, heart and eye.

It localises to the endoplasmic reticulum membrane. The catalysed reaction is a di-trans,poly-cis-dolichyl beta-D-mannosyl phosphate + L-seryl-[protein] = 3-O-(alpha-D-mannosyl)-L-seryl-[protein] + a di-trans,poly-cis-dolichyl phosphate + H(+). The enzyme catalyses a di-trans,poly-cis-dolichyl beta-D-mannosyl phosphate + L-threonyl-[protein] = 3-O-(alpha-D-mannosyl)-L-threonyl-[protein] + a di-trans,poly-cis-dolichyl phosphate + H(+). The protein operates within protein modification; protein glycosylation. Its function is as follows. Transfers mannosyl residues to the hydroxyl group of serine or threonine residues. Coexpression of both POMT1 and POMT2 is necessary for enzyme activity, expression of either POMT1 or POMT2 alone is insufficient. This Danio rerio (Zebrafish) protein is Protein O-mannosyl-transferase 2.